The following is a 414-amino-acid chain: 5-aminolevulinate synthase (414 aa).

Residues Arg22, Ser133, and Lys152 each coordinate substrate. The pyridoxal 5'-phosphate site is built by Ser185, His213, and Thr241. Residue Lys244 is part of the active site. An N6-(pyridoxal phosphate)lysine modification is found at Lys244. Pyridoxal 5'-phosphate contacts are provided by Thr273 and Thr274. Thr359 is a substrate binding site.

The protein belongs to the class-II pyridoxal-phosphate-dependent aminotransferase family. Homodimer. Pyridoxal 5'-phosphate is required as a cofactor.

The catalysed reaction is succinyl-CoA + glycine + H(+) = 5-aminolevulinate + CO2 + CoA. Its pathway is porphyrin-containing compound metabolism; protoporphyrin-IX biosynthesis; 5-aminolevulinate from glycine: step 1/1. This Rickettsia felis (strain ATCC VR-1525 / URRWXCal2) (Rickettsia azadi) protein is 5-aminolevulinate synthase (hemA).